We begin with the raw amino-acid sequence, 312 residues long: Methionyl-tRNA formyltransferase (312 aa).

111 to 114 (SLLP) is a binding site for (6S)-5,6,7,8-tetrahydrofolate.

The protein belongs to the Fmt family.

It carries out the reaction L-methionyl-tRNA(fMet) + (6R)-10-formyltetrahydrofolate = N-formyl-L-methionyl-tRNA(fMet) + (6S)-5,6,7,8-tetrahydrofolate + H(+). Functionally, attaches a formyl group to the free amino group of methionyl-tRNA(fMet). The formyl group appears to play a dual role in the initiator identity of N-formylmethionyl-tRNA by promoting its recognition by IF2 and preventing the misappropriation of this tRNA by the elongation apparatus. In Rhodopseudomonas palustris (strain HaA2), this protein is Methionyl-tRNA formyltransferase.